The chain runs to 1170 residues: MALTRYQIRNEYGLADKELYQSADKEDPEALLEAASMAGLVGVLRQLGDLSEFAAEVFHCLHEQLMTTAARGHGLAMRLQHLEADFPSVEIPILSQTDHSTFFYEPGLEWHSDLQTKEDLISPRNLPRCIMDSYEECHGPPQLFLLDKFDVAGSGSCLKRYSDPSLLKTHTTSAVVATSKLGKDKRLRQSKKKGSHTTIKETPEDSRTSHAKLHQLFFLEHVENGHRNPEFHVKLKRRQLNGPPINSSSGASYMEKFLKNSSPYCERVHGTMDQSSPAMETEVTVCSEQEDLPIPSLVYSNSGGTRKYNEMEIESIAGHEILEIPFVPHEITVNEKSPVVCLESSSSVNLCCKTNNDADSPASTESEVKEAGSDDKAGCDHGFPGFGQPQICTNAEVNQTEVLTQFSNVLRHSPEEGESSLLCTDIQRASPESKPHKAEEAAVDLDESFSQMTPDIDSAGMGTLEILQTPFSLSCYESPANLPEDSGSHLELQSNKANAEACEVFEVRRDPMLNISPETHLLKVTQVPQDAYEGGTNDVHSQHVFSVETASEISVSALVEDQFSSITNQEIEALESEDISSEAGHFIPDTKKSLNETSVALESDFLLPNHYISTFDNFEDLSLSADAQDYAAPKEDETNSQDGSSMNPAQSKHISTSEISSENGTLMSDTPRDLHTGYGSLSASSCLEDGLANPDLAEISSYSGQEDPQTMSIVSDDSSDPEVPIPDGTCFAGDVDHDNQTGLNNKAIETVPQKELETISDPQESLLGTEECLSSEYCLQIQNQRQESPSETGSANSRTSSDESPPTQNGSVGVQSSPLDVFPSSITEIEALHAPYQEIFTSLNDHISESVLSKGLTDEEDFLNVSPESILPLSTSLHETPQANPEITPPLPPLPPTQWWMGKLVESTEMPSLAGSGNNSFNIQRDENTQNGSVQANEAQYPSEVSVTDGENHNFHIYTEESKATEEQSPSGVNGTSDTYMESKHKCLNRTPEDSFSLAESAQGLEADWRTEAMALEWFSQNLREHNNPHPAKLEEEEPQVDHPLEKPGQTKFRQTLRDNNSYNQNQKAGKLKRDEDTLVIGIDRSMLRKVSEGNRTHVGARVDENDSLLEIIRSKSFNLRPADASGRPNFQVAVPKTNLKVAAILEKANTLRQAMAGSDDEHDSDSWSE.

Disordered regions lie at residues 180 to 207 (KLGKDKRLRQSKKKGSHTTIKETPEDSR), 356 to 376 (NDADSPASTESEVKEAGSDDK), 631 to 674 (AAPK…PRDL), 701 to 742 (SYSG…NQTG), 783 to 819 (NQRQESPSETGSANSRTSSDESPPTQNGSVGVQSSPL), 960 to 980 (EESKATEEQSPSGVNGTSDTY), and 1026 to 1046 (HNNPHPAKLEEEEPQVDHPLE). Residues 183–195 (KDKRLRQSKKKGS) are compositionally biased toward basic residues. Basic and acidic residues predominate over residues 198 to 207 (TIKETPEDSR). The span at 356–365 (NDADSPASTE) shows a compositional bias: polar residues. Residues 366 to 376 (SEVKEAGSDDK) show a composition bias toward basic and acidic residues. 4 stretches are compositionally biased toward polar residues: residues 640-668 (SQDGSSMNPAQSKHISTSEISSENGTLMS), 701-716 (SYSGQEDPQTMSIVSD), 783-818 (NQRQESPSETGSANSRTSSDESPPTQNGSVGVQSSP), and 967-980 (EQSPSGVNGTSDTY). The WH2 domain occupies 1105-1123 (ENDSLLEIIRSKSFNLRPA).

It belongs to the SCAR/WAVE family. In terms of assembly, interacts with SPK1. As to expression, expressed in expanding cotyledons, expanding leaves and expanding siliques containing developing embryos. Detected in unopened flower buds and in the expanding tip region of roots. Reduced expression in mature leaves.

It is found in the cytoplasm. The protein resides in the cytoskeleton. Involved in regulation of actin and microtubule organization. Part of a WAVE complex that activates the Arp2/3 complex. Regulates trichome branch positioning and expansion. The polypeptide is Protein SCAR4 (SCAR4) (Arabidopsis thaliana (Mouse-ear cress)).